Reading from the N-terminus, the 398-residue chain is ATP-dependent RNA helicase eIF4A (398 aa).

A Q motif motif is present at residues 25–53; that stretch reads DSFDSMDLKPELLRGIYAYGFERPSAIQQ. One can recognise a Helicase ATP-binding domain in the interval 56 to 226; the sequence is IMPIIKGSDV…TKFMRDPVRI (171 aa). 69–76 lines the ATP pocket; sequence AQSGTGKT. The DEAD box motif lies at 174–177; it reads DEAD. Residues 237 to 398 enclose the Helicase C-terminal domain; sequence GIKQFYIAVE…EMPMNVADLI (162 aa).

Belongs to the DEAD box helicase family. eIF4A subfamily. As to quaternary structure, component of the eIF4F complex, which composition varies with external and internal environmental conditions. It is composed of at least eIF4A, eIF4E and eIF4G.

The protein resides in the cytoplasm. The catalysed reaction is ATP + H2O = ADP + phosphate + H(+). Functionally, ATP-dependent RNA helicase which is a subunit of the eIF4F complex involved in cap recognition and is required for mRNA binding to ribosome. In the current model of translation initiation, eIF4A unwinds RNA secondary structures in the 5'-UTR of mRNAs which is necessary to allow efficient binding of the small ribosomal subunit, and subsequent scanning for the initiator codon. The polypeptide is ATP-dependent RNA helicase eIF4A (tif1) (Aspergillus clavatus (strain ATCC 1007 / CBS 513.65 / DSM 816 / NCTC 3887 / NRRL 1 / QM 1276 / 107)).